Consider the following 306-residue polypeptide: High osmolarity signaling protein MOS1 (306 aa).

At 1-23 (MEHSRPYGGRKRMSLGNILGDPF) the chain is on the cytoplasmic side. Residues 24 to 44 (ALATISISLLAWFITFISCVI) form a helical membrane-spanning segment. The Extracellular segment spans residues 45 to 67 (AQVQANKNKGLPDKDNPDGNFPP). The helical transmembrane segment at 68 to 88 (FAWWAVVYSLFLIVGVVIVVA) threads the bilayer. The Cytoplasmic segment spans residues 89–96 (SDAIQTYH). The helical transmembrane segment at 97 to 117 (VAVTGYLAGGMVLVTSGVNSL) threads the bilayer. Topologically, residues 118–126 (VYSKNGARE) are extracellular. A helical transmembrane segment spans residues 127 to 147 (AAAAGFILLSMVVIVWIFYFG). Over 148-306 (STPSSTPRAF…IAPSNYLILL (159 aa)) the chain is Cytoplasmic. The segment at 204 to 242 (FENPSPVGGASQAPTAPTMPTYGNNTMQPNNKSNDEEVL) is disordered. The span at 224–235 (TYGNNTMQPNNK) shows a compositional bias: polar residues. The 61-residue stretch at 246 to 306 (DYPYQAKAIY…IAPSNYLILL (61 aa)) folds into the SH3 domain.

The protein belongs to the SHO1 family. In terms of assembly, forms homooligomers.

It is found in the cell membrane. Functionally, plasma membrane osmosensor that activates the high osmolarity glycerol (HOG) MAPK signaling pathway in response to high osmolarity. Affects fungal virulence. In Metarhizium robertsii (strain ARSEF 23 / ATCC MYA-3075) (Metarhizium anisopliae (strain ARSEF 23)), this protein is High osmolarity signaling protein MOS1 (MOS1).